Here is a 125-residue protein sequence, read N- to C-terminus: Somatostatin-2 (125 aa).

Residues methionine 1–serine 24 form the signal peptide. Glutamine 25 is modified (pyrrolidone carboxylic acid). Positions glutamine 25–arginine 97 are excised as a propeptide. Positions alanine 82–proline 107 are disordered. An intrachain disulfide couples cysteine 114 to cysteine 125. Residue lysine 120 is modified to 5-hydroxylysine.

This sequence belongs to the somatostatin family.

It localises to the secreted. Its function is as follows. Somatostatin inhibits the release of somatotropin. This chain is Somatostatin-2 (sst2), found in Lophius americanus (American angler).